The primary structure comprises 171 residues: Small ribosomal subunit protein uS13 (171 aa).

Over residues 1 to 11 (MAKGSANNVKV) the composition is skewed to polar residues. Disordered regions lie at residues 1-24 (MAKG…EKKE) and 144-164 (EKGK…GLSI). Residues 144 to 158 (EKGKKVRGQRTRSNG) show a composition bias toward basic residues.

This sequence belongs to the universal ribosomal protein uS13 family. Part of the 30S ribosomal subunit. Forms a loose heterodimer with protein S19. Forms two bridges to the 50S subunit in the 70S ribosome.

Its function is as follows. Located at the top of the head of the 30S subunit, it contacts several helices of the 16S rRNA. In the 70S ribosome it contacts the 23S rRNA (bridge B1a) and protein L5 of the 50S subunit (bridge B1b), connecting the 2 subunits; these bridges are implicated in subunit movement. The polypeptide is Small ribosomal subunit protein uS13 (Thermoplasma acidophilum (strain ATCC 25905 / DSM 1728 / JCM 9062 / NBRC 15155 / AMRC-C165)).